The primary structure comprises 59 residues: DNA gyrase inhibitor YacG (59 aa).

Positions 9, 12, 27, and 31 each coordinate Zn(2+).

It belongs to the DNA gyrase inhibitor YacG family. Interacts with GyrB. Zn(2+) is required as a cofactor.

Inhibits all the catalytic activities of DNA gyrase by preventing its interaction with DNA. Acts by binding directly to the C-terminal domain of GyrB, which probably disrupts DNA binding by the gyrase. The sequence is that of DNA gyrase inhibitor YacG from Geotalea daltonii (strain DSM 22248 / JCM 15807 / FRC-32) (Geobacter daltonii).